A 415-amino-acid chain; its full sequence is Thyroxine-binding globulin (415 aa).

The signal sequence occupies residues 1–20; it reads MSPFLYLVLLVLGLHATIHC. An N-linked (GlcNAc...) (complex) asparagine glycan is attached at asparagine 36. The N-linked (GlcNAc...) asparagine glycan is linked to asparagine 99. A glycan (N-linked (GlcNAc...) asparagine; in variant Gary) is linked at isoleucine 116. Asparagine 165 and asparagine 253 each carry an N-linked (GlcNAc...) asparagine glycan. Thyroxine contacts are provided by asparagine 293 and arginine 398.

It belongs to the serpin family. Expressed by the liver and secreted in plasma.

Its subcellular location is the secreted. Major thyroid hormone transport protein in serum. The chain is Thyroxine-binding globulin (SERPINA7) from Homo sapiens (Human).